Consider the following 201-residue polypeptide: Small ribosomal subunit protein uS4c (201 aa).

A disordered region spans residues 19-38 (PGLTSKSPKAGSDLRNQLRS). An S4 RNA-binding domain is found at 89 to 149 (MRLDNILFRL…DEQKSRALIQ (61 aa)).

Belongs to the universal ribosomal protein uS4 family. As to quaternary structure, part of the 30S ribosomal subunit. Contacts protein S5. The interaction surface between S4 and S5 is involved in control of translational fidelity.

It is found in the plastid. It localises to the chloroplast. One of the primary rRNA binding proteins, it binds directly to 16S rRNA where it nucleates assembly of the body of the 30S subunit. Functionally, with S5 and S12 plays an important role in translational accuracy. This chain is Small ribosomal subunit protein uS4c (rps4), found in Platanus occidentalis (Sycamore).